The sequence spans 839 residues: Phenylalanine--tRNA ligase beta subunit (839 aa).

One can recognise a tRNA-binding domain in the interval 42–166 (GELTGPIVIG…PPSVEGHQLV (125 aa)). The region spanning 421–496 (PEMPRQTINA…RKIGFDRIKA (76 aa)) is the B5 domain. Residues D474, D480, E483, and E484 each contribute to the Mg(2+) site. An FDX-ACB domain is found at 745–838 (SSFPVAKEDV…AEETCGAQLR (94 aa)).

It belongs to the phenylalanyl-tRNA synthetase beta subunit family. Type 1 subfamily. In terms of assembly, tetramer of two alpha and two beta subunits. Mg(2+) serves as cofactor.

It is found in the cytoplasm. The catalysed reaction is tRNA(Phe) + L-phenylalanine + ATP = L-phenylalanyl-tRNA(Phe) + AMP + diphosphate + H(+). This Cutibacterium acnes (strain DSM 16379 / KPA171202) (Propionibacterium acnes) protein is Phenylalanine--tRNA ligase beta subunit.